Reading from the N-terminus, the 134-residue chain is TSC22 domain family protein 3 (134 aa).

An N-acetylmethionine modification is found at M1. The segment at 1-60 (MNTEMYQTPMEVAVYQLHNFSISFFSSLLGGDVVSVKLDNSASGASVVAIDNKIEQAMDL) is AP1-binding. A phosphoserine mark is found at A42 and V73. The tract at residues 76 to 97 (LKEQIRELVEKNSQLERENTLL) is leucine-zipper. S102 is subject to Phosphoserine. A disordered region spans residues 108 to 134 (KFQSCLSPEEPAPESPQVPEAPGGSAV).

Belongs to the TSC-22/Dip/Bun family. Can form homodimers, however it is likely to function as a monomer. Interacts with NFKB1. Interacts (via N-terminus) with JUN and FOS; these interactions inhibit the binding of active AP1 to its target DNA. As to quaternary structure, interacts with MYOD1. Interacts with HDAC1; this interaction affects HDAC1 activity on MYOG promoter and thus inhibits MYOD1 transcriptional activity. Ubiquitously expressed, including in the fetal brain and liver. Expressed in brain, lung, spleen and skeletal muscle. Lower levels detected in heart and kidney. Not detected in the pancreas. In non-lymphoid tissues, in the absence of inflammation, the major source of constitutive expression is the macrophage lineage. Also expressed in cells from different hemopoietic cell lineages, including bone marrow cells, CD34+ stem cells, mature B- and T-cells, monocytes and granulocytes. Down-regulated in activated macrophages from inflammatory lesions of delayed-type hypersensitivity (DTH) reactions, such as in tuberculosis and in Crohn disease, whereas in Burkitt lymphoma, persists in macrophages involved in the phagocytosis of apoptotic malignant cells.

Its subcellular location is the cytoplasm. The protein resides in the nucleus. Protects T-cells from IL2 deprivation-induced apoptosis through the inhibition of FOXO3A transcriptional activity that leads to the down-regulation of the pro-apoptotic factor BCL2L11. In macrophages, plays a role in the anti-inflammatory and immunosuppressive effects of glucocorticoids and IL10. In T-cells, inhibits anti-CD3-induced NFKB1 nuclear translocation and thereby NFKB1 DNA-binding activities. In vitro, suppresses AP-1 transcription factor complex DNA-binding activities. Its function is as follows. Inhibits myogenic differentiation and mediates anti-myogenic effects of glucocorticoids by binding and regulating MYOD1 and HDAC1 transcriptional activity resulting in reduced expression of MYOG. The protein is TSC22 domain family protein 3 of Homo sapiens (Human).